A 321-amino-acid polypeptide reads, in one-letter code: MISMILLNITNSLLYILSILIAVAFLTLLERKLLGYMQHRKGPNLVGPMGLLQPIADGLKLITKEATKPTMSSPILFTLSPIMALILALTSWAPMPMPTPLTNMNLGLLFIMAMSGMFTYAILWSGWSSNSKYPLMGAMRAVAQIISYEVTLGLIIISMAILSGGYSLMLFTETQEHMWLLLSSWPLAMMWFTSTLAETNRSPFDLTEGESELVSGFNVEFSAGPFALLFLAEYTNILFMNTLSTMMFLNPGMTNPQLFTINLMTKTMILTTLFLWTRASYPRFRYDQLMHLLWKQYLPLTLAMYLLNTSTSMALCGTPPQ.

The next 8 membrane-spanning stretches (helical) occupy residues 9-29 (ITNSLLYILSILIAVAFLTLL), 75-95 (ILFTLSPIMALILALTSWAPM), 106-126 (LGLLFIMAMSGMFTYAILWSG), 151-171 (TLGLIIISMAILSGGYSLMLF), 177-197 (HMWLLLSSWPLAMMWFTSTLA), 219-239 (VEFSAGPFALLFLAEYTNILF), 256-276 (PQLFTINLMTKTMILTTLFLW), and 297-317 (YLPLTLAMYLLNTSTSMALCG).

This sequence belongs to the complex I subunit 1 family.

Its subcellular location is the mitochondrion inner membrane. The enzyme catalyses a ubiquinone + NADH + 5 H(+)(in) = a ubiquinol + NAD(+) + 4 H(+)(out). In terms of biological role, core subunit of the mitochondrial membrane respiratory chain NADH dehydrogenase (Complex I) that is believed to belong to the minimal assembly required for catalysis. Complex I functions in the transfer of electrons from NADH to the respiratory chain. The immediate electron acceptor for the enzyme is believed to be ubiquinone. This chain is NADH-ubiquinone oxidoreductase chain 1 (MT-ND1), found in Lycodon semicarinatus (Ryukyu odd-tooth snake).